Consider the following 488-residue polypeptide: Germacrene A hydroxylase (488 aa).

Over 1-6 (MELSFT) the chain is Cytoplasmic. A helical; Signal-anchor for type II membrane protein membrane pass occupies residues 7–23 (TSIAVATIVFVLFKLAT). Residues 24–488 (RPKSNKKLLP…KTHLVLVPSF (465 aa)) are Lumenal-facing. Residues Asn-255, Asn-260, and Asn-379 are each glycosylated (N-linked (GlcNAc...) asparagine). Cys-432 provides a ligand contact to heme.

This sequence belongs to the cytochrome P450 family. Heme is required as a cofactor.

It localises to the endoplasmic reticulum membrane. It catalyses the reaction (+)-(R)-germacrene A + 3 reduced [NADPH--hemoprotein reductase] + 3 O2 = germacra-1(10),4,11(13)-trien-12-oate + 3 oxidized [NADPH--hemoprotein reductase] + 4 H2O + 4 H(+). Its pathway is secondary metabolite biosynthesis; terpenoid biosynthesis. In terms of biological role, involved in the biosynthesis of germacrene-derived sesquiterpene lactones. Catalyzes three consecutive oxidations of germacrene A to produce germacrene A acid. Could also catalyze the three-step oxidation of non-natural substrate amorphadiene to artemisinic acid. In Saussurea costus (Costus), this protein is Germacrene A hydroxylase.